The sequence spans 282 residues: Pantothenate synthetase (282 aa).

Residue 30–37 coordinates ATP; that stretch reads MGALHAGH. The active-site Proton donor is His37. Residue Gln61 coordinates (R)-pantoate. Gln61 contributes to the beta-alanine binding site. Residue 147 to 150 participates in ATP binding; it reads GEKD. Residue Gln153 participates in (R)-pantoate binding. Residues Val176 and 184-187 contribute to the ATP site; that span reads LSSR.

This sequence belongs to the pantothenate synthetase family. Homodimer.

It localises to the cytoplasm. It catalyses the reaction (R)-pantoate + beta-alanine + ATP = (R)-pantothenate + AMP + diphosphate + H(+). The protein operates within cofactor biosynthesis; (R)-pantothenate biosynthesis; (R)-pantothenate from (R)-pantoate and beta-alanine: step 1/1. Functionally, catalyzes the condensation of pantoate with beta-alanine in an ATP-dependent reaction via a pantoyl-adenylate intermediate. The polypeptide is Pantothenate synthetase (Bacteroides fragilis (strain YCH46)).